Consider the following 266-residue polypeptide: MKLAHLGRQALMGVMAVALVAGMSVKSFADEGLLNKVKERGTLLVGLEGTYPPFSFQGDDGKLTGFEVEFAQQLAKHLGVEASLKPTKWDGMLASLDSKRIDVVINQVTISDERKKKYDFSTPYTISGIQALVKKGNEGTIKTADDLKGKKVGVGLGTNYEEWLRQNVQGVDVRTYDDDPTKYQDLRVGRIDAILVDRLAALDLVKKTNDTLAVTGEAFSRQESGVALRKGNEDLLKAVNDAIAEMQKDGTLQALSEKWFGADVTK.

The N-terminal stretch at 1-29 (MKLAHLGRQALMGVMAVALVAGMSVKSFA) is a signal peptide.

The protein belongs to the bacterial solute-binding protein 3 family. In terms of assembly, the complex is composed of two ATP-binding proteins (TcyN), two transmembrane proteins (TcyL) and a solute-binding protein (TcyJ).

It is found in the periplasm. In terms of biological role, part of the ABC transporter complex TcyJLN involved in L-cystine import. Binds cystine. This is L-cystine-binding protein TcyJ from Escherichia coli O6:H1 (strain CFT073 / ATCC 700928 / UPEC).